The sequence spans 366 residues: DNA double-strand break repair protein Mre11 (366 aa).

4 residues coordinate Mn(2+): Asp8, His10, Asp49, and Asn84. The active-site Proton donor is the His85. Residues His158, His186, and His188 each coordinate Mn(2+).

This sequence belongs to the MRE11/RAD32 family. As to quaternary structure, homodimer. Forms a heterotetramer composed of two Mre11 subunits and two Rad50 subunits. The cofactor is Mn(2+).

Nuclease activity is regulated by Rad50. Functionally, part of the Rad50/Mre11 complex, which is involved in the early steps of DNA double-strand break (DSB) repair. The complex may facilitate opening of the processed DNA ends to aid in the recruitment of HerA and NurA. Mre11 binds to DSB ends and has both double-stranded 3'-5' exonuclease activity and single-stranded endonuclease activity. This is DNA double-strand break repair protein Mre11 from Methanocaldococcus jannaschii (strain ATCC 43067 / DSM 2661 / JAL-1 / JCM 10045 / NBRC 100440) (Methanococcus jannaschii).